The following is a 247-amino-acid chain: Uridylate kinase (247 aa).

ATP is bound at residue 15–18 (KLSG). The involved in allosteric activation by GTP stretch occupies residues 23 to 28 (GEEGFG). Gly-57 provides a ligand contact to UMP. ATP is bound by residues Gly-58 and Arg-62. UMP-binding positions include Asp-77 and 138-145 (TGNPFFTT). Thr-165, Tyr-171, and Asp-174 together coordinate ATP.

This sequence belongs to the UMP kinase family. Homohexamer.

Its subcellular location is the cytoplasm. The enzyme catalyses UMP + ATP = UDP + ADP. The protein operates within pyrimidine metabolism; CTP biosynthesis via de novo pathway; UDP from UMP (UMPK route): step 1/1. With respect to regulation, allosterically activated by GTP. Inhibited by UTP. Catalyzes the reversible phosphorylation of UMP to UDP. The protein is Uridylate kinase of Pseudoalteromonas atlantica (strain T6c / ATCC BAA-1087).